We begin with the raw amino-acid sequence, 627 residues long: DNA mismatch repair protein MutL (627 aa).

Positions 376-404 are disordered; the sequence is APASTNEVREGSAARAGNYQPPEPPSREA.

It belongs to the DNA mismatch repair MutL/HexB family.

Its function is as follows. This protein is involved in the repair of mismatches in DNA. It is required for dam-dependent methyl-directed DNA mismatch repair. May act as a 'molecular matchmaker', a protein that promotes the formation of a stable complex between two or more DNA-binding proteins in an ATP-dependent manner without itself being part of a final effector complex. The polypeptide is DNA mismatch repair protein MutL (Aeromonas salmonicida (strain A449)).